Reading from the N-terminus, the 95-residue chain is Putative ESAT-6-like protein X (95 aa).

Residues 72-95 (HGQKVQRASSSMADTDRSVSSAWS) form a disordered region.

The protein belongs to the WXG100 family.

This is Putative ESAT-6-like protein X from Mycobacterium leprae (strain TN).